The sequence spans 113 residues: Small ribosomal subunit protein bS6 (113 aa).

This sequence belongs to the bacterial ribosomal protein bS6 family.

Functionally, binds together with bS18 to 16S ribosomal RNA. In Vesicomyosocius okutanii subsp. Calyptogena okutanii (strain HA), this protein is Small ribosomal subunit protein bS6.